The sequence spans 88 residues: U18-hexatoxin-Hi1a (88 aa).

An N-terminal signal peptide occupies residues 1–17; the sequence is MRIYSLLILSFLLLASA. A propeptide spanning residues 18-47 is cleaved from the precursor; sequence VLINSAEMPRSEKSLLYSIMQGREDSEEGR. 4 cysteine pairs are disulfide-bonded: Cys-48–Cys-63, Cys-55–Cys-69, Cys-62–Cys-81, and Cys-71–Cys-79.

It belongs to the neurotoxin 07 (Beta/delta-agtx) family. 02 (aga-3) subfamily. Expressed by the venom gland.

The protein resides in the secreted. In terms of biological role, weak insecticidal toxin with probable ion channel impairing activity. In vivo, induces paralysis when injected into sheep blowflies (L.cuprina). Shows weak toxicity, since it is only toxic at high doses, and flies recover within 24 hours. The polypeptide is U18-hexatoxin-Hi1a (Hadronyche infensa (Fraser island funnel-web spider)).